Reading from the N-terminus, the 590-residue chain is Type I inositol polyphosphate 5-phosphatase 1 (590 aa).

The interval 47-73 (DYSADSDDDYEDRSQEFDPISSGVTNP) is disordered. Residues 48–57 (YSADSDDDYE) show a composition bias toward acidic residues. The residue at position 60 (S60) is a Phosphoserine. 2 catalytic regions span residues 445 to 460 (ERIIWLGDLNYRINLS) and 523 to 538 (GKRRPAWCDRIIWNGK).

This sequence belongs to the inositol polyphosphate 5-phosphatase family. Expressed ubiquitously.

The enzyme catalyses 1D-myo-inositol 1,4,5-trisphosphate + H2O = 1D-myo-inositol 1,4-bisphosphate + phosphate. It carries out the reaction 1D-myo-inositol 1,3,4,5-tetrakisphosphate + H2O = 1D-myo-inositol 1,3,4-trisphosphate + phosphate. Has phosphatase activity toward Ins(1,4,5)P3 and Ins(1,3,4,5)P4, but not toward Ins(1,4)P2, Ins(1)P. Seems to be involved in the abscisic acid (ABA) signaling pathway. Could also be able to hydrolyze PtdIns(4,5)P2 and PtdIns(3,4,5)P3. The chain is Type I inositol polyphosphate 5-phosphatase 1 from Arabidopsis thaliana (Mouse-ear cress).